Here is a 601-residue protein sequence, read N- to C-terminus: MLTRKPSAAAPAAYPTGRGGDSAVRQLQASPGLGAGATRSGVGTGPPSPIALPPLRASNAAAAAHTIGGSKHTMNDHLHVGSHAHGQIQVQQLFEDNSNKRTVLTTQPNGLTTVGKTGLPVVPERQLDSIHRRQGSSTSLKSMEGMGKVKATPMTPEQAMKQYMQKLTAFEHHEIFSYPEIYFLGLNAKKRQGMTGGPNNGGYDDDQGSYVQVPHDHVAYRYEVLKVIGKGSFGQVVKAYDHKVHQHVALKMVRNEKRFHRQAAEEIRILEHLRKQDKDNTMNVIHMLENFTFRNHICMTFELLSMNLYELIKKNKFQGFSLPLVRKFAHSILQCLDALHKNRIIHCDLKPENILLKQQGRSGIKVIDFGSSCYEHQRVYTYIQSRFYRAPEVILGARYGMPIDMWSLGCILAELLTGYPLLPGEDEGDQLACMIELLGMPSQKLLDASKRAKNFVSSKGYPRYCTVTTLSDGSVVLNGGRSRRGKLRGPPESREWGNALKGCDDPLFLDFLKQCLEWDPAVRMTPGQALRHPWLRRRLPKPPTGEKTSVKRITESTGAITSISKLPPPSSSASKLRTNLAQMTDANGNIQQRTVLPKLVS.

The segment at 1–24 (MLTRKPSAAAPAAYPTGRGGDSAV) is disordered. Serine 30 is modified (phosphoserine). Threonine 106 is subject to Phosphothreonine; by ATM. The short motif at 189 to 191 (KKR) is the Nuclear localization signal element. The Protein kinase domain maps to 222–535 (YEVLKVIGKG…PGQALRHPWL (314 aa)). Residues 228-236 (IGKGSFGQV), lysine 251, and 301-304 (FELL) each bind ATP. The active-site Proton acceptor is the aspartate 348. Threonine 381 is modified (phosphothreonine; by MAP3K10). Tyrosine 382 bears the Phosphotyrosine; by autocatalysis mark. Serine 442 is subject to Phosphoserine; by ATM. A Phosphoserine; by MAP3K10 modification is found at serine 449.

It belongs to the protein kinase superfamily. CMGC Ser/Thr protein kinase family. MNB/DYRK subfamily. Component of an E3 ligase complex containing DYRK2, EDD/UBR5, DDB1 and DCAF1 (EDVP complex). Interacts directly with EDD/UBR5, DDB1 and DCAF1. Interacts with SIAH2 and MDM2. Interacts with MAP3K10 and NFATC1. May also interact with CCNL2. Mg(2+) is required as a cofactor. Requires Mn(2+) as cofactor. In terms of processing, autophosphorylates cotranslationally on the second tyrosine residue in the Tyr-X-Tyr motif in the activation loop, but once mature, does not have any protein tyrosine kinase activity. Phosphorylated at Thr-106 and Ser-442 by ATM in response to genotoxic stress. Post-translationally, under normal conditions, polyubiquitinated in the nucleus by MDM2, leading to its proteasomal degradation. Phosphorylation on Thr-106 and Ser-442 by ATM in response to genotoxic stress disrupts MDM2 binding and prevents MDM2-mediated ubiquitination and subsequent proteasomal degradation. Polyubiquitinated by SIAH2, leading to its proteasomal degradation. Polyubiquitinated by SIAH2 occurs under normal conditions, and is enhanced in response to hypoxia. Testis, after the onset of spermatogenesis.

It is found in the cytoplasm. It localises to the nucleus. The enzyme catalyses L-seryl-[protein] + ATP = O-phospho-L-seryl-[protein] + ADP + H(+). It carries out the reaction L-threonyl-[protein] + ATP = O-phospho-L-threonyl-[protein] + ADP + H(+). It catalyses the reaction L-tyrosyl-[protein] + ATP = O-phospho-L-tyrosyl-[protein] + ADP + H(+). Activated by autophosphorylation on the second tyrosine residue in the Tyr-X-Tyr motif in the activation loop. Inhibited by acridine analogs, purvalanol, and barely by harmine. Inhibited by leucettine and leucettine derivatives. In terms of biological role, serine/threonine-protein kinase involved in the regulation of the mitotic cell cycle, cell proliferation, apoptosis, organization of the cytoskeleton and neurite outgrowth. Functions in part via its role in ubiquitin-dependent proteasomal protein degradation. Functions downstream of ATM and phosphorylates p53/TP53 at 'Ser-46', and thereby contributes to the induction of apoptosis in response to DNA damage. Phosphorylates NFATC1, and thereby inhibits its accumulation in the nucleus and its transcription factor activity. Phosphorylates EIF2B5 at 'Ser-544', enabling its subsequent phosphorylation and inhibition by GSK3B. Likewise, phosphorylation of NFATC1, CRMP2/DPYSL2 and CRMP4/DPYSL3 promotes their subsequent phosphorylation by GSK3B. May play a general role in the priming of GSK3 substrates. Inactivates GYS1 by phosphorylation at 'Ser-641', and potentially also a second phosphorylation site, thus regulating glycogen synthesis. Mediates EDVP E3 ligase complex formation and is required for the phosphorylation and subsequent degradation of KATNA1. Phosphorylates TERT at 'Ser-457', promoting TERT ubiquitination by the EDVP complex. Phosphorylates SIAH2, and thereby increases its ubiquitin ligase activity. Promotes the proteasomal degradation of MYC and JUN, and thereby regulates progress through the mitotic cell cycle and cell proliferation. Promotes proteasomal degradation of GLI2 and GLI3, and thereby plays a role in smoothened and sonic hedgehog signaling. Plays a role in cytoskeleton organization and neurite outgrowth via its phosphorylation of DCX and DPYSL2. Phosphorylates CRMP2/DPYSL2, CRMP4/DPYSL3, DCX, EIF2B5, EIF4EBP1, GLI2, GLI3, GYS1, JUN, MDM2, MYC, NFATC1, p53/TP53, TAU/MAPT and KATNA1. Can phosphorylate histone H1, histone H3 and histone H2B (in vitro). Can phosphorylate CARHSP1 (in vitro). This Homo sapiens (Human) protein is Dual specificity tyrosine-phosphorylation-regulated kinase 2 (DYRK2).